Consider the following 139-residue polypeptide: Large ribosomal subunit protein bL17 (139 aa).

It belongs to the bacterial ribosomal protein bL17 family. Part of the 50S ribosomal subunit. Contacts protein L32.

The chain is Large ribosomal subunit protein bL17 from Afipia carboxidovorans (strain ATCC 49405 / DSM 1227 / KCTC 32145 / OM5) (Oligotropha carboxidovorans).